The primary structure comprises 379 residues: Probable G-protein coupled receptor 27 (379 aa).

Topologically, residues 1-26 (MANASEPGGGGSGGGAEAAALGLRLA) are extracellular. Residue asparagine 3 is glycosylated (N-linked (GlcNAc...) asparagine). A helical transmembrane segment spans residues 27–47 (TLSLLLCVSLAGNVLFALLIV). The Cytoplasmic segment spans residues 48–58 (RERSLHRAPYY). Residues 59-79 (LLLDLCLADGLRALACLPAVM) form a helical membrane-spanning segment. Residues 80–100 (LAARRAAAAAGTPPGALGCKL) are Extracellular-facing. The cysteines at positions 98 and 175 are disulfide-linked. Residues 101-121 (LAFLAALFCFHAAFLLLGVGV) form a helical membrane-spanning segment. Over 122–142 (TRYLAIAHHRFYAERLAGWPC) the chain is Cytoplasmic. A helical transmembrane segment spans residues 143 to 163 (AAMLVCAAWALALAAAFPPVL). Topologically, residues 164-185 (DGGGADDEDAPCALEQRPDGAP) are extracellular. Residues 186-206 (GALGFLLLLAAVVGATHLVYL) form a helical membrane-spanning segment. Residues 207–289 (RLLFFIHDRR…FKTEKRLCKM (83 aa)) are Cytoplasmic-facing. Residues 290–310 (FYAITLLFLLLWGPYVVASYL) traverse the membrane as a helical segment. At 311 to 324 (RVLVRPGAVPQAYL) the chain is on the extracellular side. The helical transmembrane segment at 325–345 (TASVWLTFAQAGINPVVCFLF) threads the bilayer. Over 346–379 (NRELRDCFRAQFPCCQSPQATQATLPCDLKGIGL) the chain is Cytoplasmic.

This sequence belongs to the G-protein coupled receptor 1 family.

It localises to the cell membrane. In terms of biological role, orphan receptor. Possible candidate for amine-like G-protein coupled receptor. The sequence is that of Probable G-protein coupled receptor 27 (Gpr27) from Mus musculus (Mouse).